Consider the following 226-residue polypeptide: Xanthocillin biosynthesis cluster protein F (226 aa).

It functions in the pathway secondary metabolite biosynthesis. In terms of biological role, part of the gene cluster that mediates the biosynthesis of the isocyanide xanthocillin and its derivatives. The first step of the pathway consists in the conversion of tyrosine into a vinyl-isonitrile intermediate by the isocyanide synthase xanB. Subsequent oxidative dimerization of this intermediate to form xanthocillin may involve the cytochrome P450 monooxygenase xanG, whose expression is coregulated with that of XanB. Xanthocillin can be further modified by the isonitrile hydratase-like protein xanA which introduces N-formyl groups and the methyltransferase xanE which introduces methyl groups, leading to the production of several derivatives including fumiformamide. Finally, fumiformamide can be subject to both oxidative and reductive cyclization to yield melanocins E and F, respectively. This is Xanthocillin biosynthesis cluster protein F from Aspergillus fumigatus (strain ATCC MYA-4609 / CBS 101355 / FGSC A1100 / Af293) (Neosartorya fumigata).